A 259-amino-acid chain; its full sequence is MSSTSSKRAPTTATQRLKQDYLRIKKDPVPYICAEPLPSNILEWHYVVRGPEMTPYEGGYYHGKLIFPREFPFKPPSIYMITPNGRFKCNTRLCLSITDFHPDTWNPAWSVSTILTGLLSFMVEKGPTLGSIETSDFTKRQLAVQSLAFNLKDKVFCELFPEVVEEIKQKQKAQDELSSRPQTLPLPDVVPDGETHLVQNGIQLLNGHAPGAVPNLAGLQQANRHHGLLGGALANLFVIVGFAAFAYTVKYVLRSIAQE.

The Cytoplasmic portion of the chain corresponds to M1–H226. Positions T12–E162 constitute a UBC core domain. C94 (glycyl thioester intermediate) is an active-site residue. A helical; Anchor for type IV membrane protein membrane pass occupies residues G227–Y247. At T248–E259 the chain is on the lumenal side.

It belongs to the ubiquitin-conjugating enzyme family. In terms of processing, auto-ubiquitinated.

The protein resides in the endoplasmic reticulum membrane. The catalysed reaction is S-ubiquitinyl-[E1 ubiquitin-activating enzyme]-L-cysteine + [E2 ubiquitin-conjugating enzyme]-L-cysteine = [E1 ubiquitin-activating enzyme]-L-cysteine + S-ubiquitinyl-[E2 ubiquitin-conjugating enzyme]-L-cysteine.. Its pathway is protein modification; protein ubiquitination. In terms of biological role, catalyzes the covalent attachment of ubiquitin to other proteins. Seems to function in the selective degradation of misfolded membrane proteins from the endoplasmic reticulum (ERAD). In cooperation with the GATOR2 complex, catalyzes 'Lys-6'-linked ubiquitination of NPRL2. The sequence is that of Ubiquitin-conjugating enzyme E2 J2 (UBE2J2) from Homo sapiens (Human).